A 291-amino-acid polypeptide reads, in one-letter code: Shikimate dehydrogenase (NADP(+)) (291 aa).

Residues 26 to 28 and Ser-73 each bind shikimate; that span reads SLS. Residue Lys-77 is the Proton acceptor of the active site. Residues Asn-98 and Asp-113 each contribute to the shikimate site. NADP(+)-binding positions include 137–141 and Val-238; that span reads GAGGA. Residue Tyr-240 coordinates shikimate. Gly-261 is a binding site for NADP(+).

It belongs to the shikimate dehydrogenase family. Homodimer.

The enzyme catalyses shikimate + NADP(+) = 3-dehydroshikimate + NADPH + H(+). It participates in metabolic intermediate biosynthesis; chorismate biosynthesis; chorismate from D-erythrose 4-phosphate and phosphoenolpyruvate: step 4/7. Involved in the biosynthesis of the chorismate, which leads to the biosynthesis of aromatic amino acids. Catalyzes the reversible NADPH linked reduction of 3-dehydroshikimate (DHSA) to yield shikimate (SA). The sequence is that of Shikimate dehydrogenase (NADP(+)) from Listeria monocytogenes serotype 4b (strain F2365).